Consider the following 1252-residue polypeptide: Elongator complex protein 1 (1252 aa).

A mediates dimerization region spans residues 814–1252 (VDVNDLYNVA…MMDWQHEILQ (439 aa)). Ser1094 is modified (phosphoserine). The interval 1097 to 1116 (SSQYSGTSRRTGKTFRSSKN) is disordered. Over residues 1106-1116 (RTGKTFRSSKN) the composition is skewed to basic residues. The required for binding to tRNA stretch occupies residues 1111-1129 (FRSSKNRRKHERKLFSLKP).

It belongs to the ELP1/IKA1 family. Homodimer. Component of the elongator complex composed of Elp1, Elp2, Elp3, Elp4, Elp5 and Elp6. The elongator complex associates with and stabilizes microtubules; efficient interaction requires the full complex.

It is found in the cytoplasm. It localises to the nucleus. The protein resides in the cytoskeleton. Its subcellular location is the spindle. It functions in the pathway tRNA modification; 5-methoxycarbonylmethyl-2-thiouridine-tRNA biosynthesis. Functionally, component of the elongator complex, which is required for multiple tRNA modifications, including mcm5U (5-methoxycarbonylmethyl uridine), mcm5s2U (5-methoxycarbonylmethyl-2-thiouridine), and ncm5U (5-carbamoylmethyl uridine). The elongator complex catalyzes formation of carboxymethyluridine in the wobble base at position 34 in tRNAs. ELP1 binds to tRNA, mediating interaction of the elongator complex with tRNA. Binding by the elongator complex stabilizes microtubules and promotes their growth. This induces central spindle asymmetry, promoting polarized signaling endosome trafficking during asymmetric cell division and cell fate assignation of sensory organ precursor cells. Involved in protein synthesis-dependent long-term memory formation, probably as part of the elongator complex. The sequence is that of Elongator complex protein 1 from Drosophila melanogaster (Fruit fly).